A 92-amino-acid polypeptide reads, in one-letter code: 10 kDa late embryogenesis abundant protein (92 aa).

Over residues 1 to 10 the composition is skewed to polar residues; that stretch reads MASQQGQQTR. The disordered stretch occupies residues 1 to 92; it reads MASQQGQQTR…GEREEEEEED (92 aa). Composition is skewed to basic and acidic residues over residues 11 to 26 and 38 to 71; these read KIPE…RAAK and KSLE…EMGK.

This sequence belongs to the small hydrophilic plant seed protein family. As to expression, maximally expressed in dry seeds. Also present in mid-maturation embryos.

Functionally, LEA proteins are late embryonic proteins abundant in higher plant seed embryos. They may play an essential role in seed survival and in controlling water exchanges during seed desiccation and imbibition. The protein is 10 kDa late embryogenesis abundant protein of Helianthus annuus (Common sunflower).